A 132-amino-acid polypeptide reads, in one-letter code: UPF0102 protein Achl_2213 (132 aa).

Belongs to the UPF0102 family.

This chain is UPF0102 protein Achl_2213, found in Pseudarthrobacter chlorophenolicus (strain ATCC 700700 / DSM 12829 / CIP 107037 / JCM 12360 / KCTC 9906 / NCIMB 13794 / A6) (Arthrobacter chlorophenolicus).